The primary structure comprises 146 residues: Large ribosomal subunit protein uL13 (146 aa).

Belongs to the universal ribosomal protein uL13 family. Part of the 50S ribosomal subunit.

Its function is as follows. This protein is one of the early assembly proteins of the 50S ribosomal subunit, although it is not seen to bind rRNA by itself. It is important during the early stages of 50S assembly. This is Large ribosomal subunit protein uL13 from Mycoplasma pneumoniae (strain ATCC 29342 / M129 / Subtype 1) (Mycoplasmoides pneumoniae).